Consider the following 430-residue polypeptide: UDP-N-acetylglucosamine 1-carboxyvinyltransferase (430 aa).

Residue Lys22 to Asn23 participates in phosphoenolpyruvate binding. Arg102 contributes to the UDP-N-acetyl-alpha-D-glucosamine binding site. Cys126 functions as the Proton donor in the catalytic mechanism. At Cys126 the chain carries 2-(S-cysteinyl)pyruvic acid O-phosphothioketal. Residues Arg131 to Leu135, Lys172 to Val175, Asp317, and Ile339 each bind UDP-N-acetyl-alpha-D-glucosamine.

The protein belongs to the EPSP synthase family. MurA subfamily.

It is found in the cytoplasm. The catalysed reaction is phosphoenolpyruvate + UDP-N-acetyl-alpha-D-glucosamine = UDP-N-acetyl-3-O-(1-carboxyvinyl)-alpha-D-glucosamine + phosphate. The protein operates within cell wall biogenesis; peptidoglycan biosynthesis. Cell wall formation. Adds enolpyruvyl to UDP-N-acetylglucosamine. The protein is UDP-N-acetylglucosamine 1-carboxyvinyltransferase of Sinorhizobium fredii (strain NBRC 101917 / NGR234).